We begin with the raw amino-acid sequence, 607 residues long: Branchpoint-bridging protein (607 aa).

Composition is skewed to polar residues over residues 1-15 (MSWR…NNIP) and 35-45 (VTPSAPSSVTN). Disordered stretches follow at residues 1–92 (MSWR…TENK) and 134–155 (VPAD…GRRV). Over residues 46 to 76 (GDRDRDRDGPVYSNDRDVKRGRSPERSEDGP) the composition is skewed to basic and acidic residues. Residues 201-281 (YVPVNDYPEI…EKVNKAKKLI (81 aa)) enclose the KH domain. CCHC-type zinc fingers lie at residues 319 to 336 (QACQ…DCPE) and 344 to 361 (IICR…DCPD). 2 disordered regions span residues 363–390 (QRGA…GGDA) and 407–607 (AAPA…PPGA). Residues 373-389 (PGAGRTAGRIGSSGGGD) show a composition bias toward gly residues. Over residues 472-500 (ARDRNERRHDDRDRGDSYYGGDRRHDDYG) the composition is skewed to basic and acidic residues. Over residues 521–533 (SAPAIPTAPAYPG) the composition is skewed to low complexity. The span at 534–545 (AYGGYPGYGAPP) shows a compositional bias: gly residues. Pro residues-rich tracts occupy residues 550 to 563 (APPP…PGAP) and 581 to 607 (APPP…PPGA).

Belongs to the BBP/SF1 family.

The protein resides in the nucleus. Functionally, necessary for the splicing of pre-mRNA. Has a role in the recognition of the branch site (5'-UACUAAC-3'), the pyrimidine tract and the 3'-splice site at the 3'-end of introns. The protein is Branchpoint-bridging protein (bbp-1) of Neurospora crassa (strain ATCC 24698 / 74-OR23-1A / CBS 708.71 / DSM 1257 / FGSC 987).